The sequence spans 76 residues: Paralithocin 3 (76 aa).

Residues 1-23 (MGPMKVLLVMLVVMVAAPHIADA) form the signal peptide. 4 disulfide bridges follow: Cys31/Cys62, Cys40/Cys58, Cys44/Cys56, and Cys49/Cys59. A Proline amide; partial modification is found at Pro74.

The protein belongs to the paralithocin family. In terms of processing, the amidated form is probably the active form.

Has antibacterial activity, mainly against marine Gram-positive bacteria like C.maltaromaticum (MIC=25 uM), C.mobile (MIC=12.5 uM), C.divergens (MIC=25 uM) and C.funditum (MIC=12.5 uM) but also against C.glutamicum (MIC=12.5 uM). Has very little or no activity against Gram-negative bacteria. This is Paralithocin 3 from Paralithodes camtschaticus (Red king crab).